A 267-amino-acid polypeptide reads, in one-letter code: Undecaprenyl-diphosphatase (267 aa).

8 helical membrane passes run 1-21 (MSYFEAFILALIQGLTEFLPI), 39-59 (QGLAFDVAVHVGTLMAVVIYF), 83-103 (AKLAWMIVIATIPACVFGLLM), 111-131 (LRSAYVIATTTIIFGLLLWWV), 144-164 (TGWKKALFIGIAQALAMIPGT), 189-209 (FLMSIPIITLAGGYLGMKLVT), 218-238 (FLLTGIVTSFISAYICIHFFL), and 246-266 (MTPFVIYRLILGFGLFAFLLM).

This sequence belongs to the UppP family.

The protein resides in the cell inner membrane. The catalysed reaction is di-trans,octa-cis-undecaprenyl diphosphate + H2O = di-trans,octa-cis-undecaprenyl phosphate + phosphate + H(+). In terms of biological role, catalyzes the dephosphorylation of undecaprenyl diphosphate (UPP). Confers resistance to bacitracin. The sequence is that of Undecaprenyl-diphosphatase from Vibrio campbellii (strain ATCC BAA-1116).